Reading from the N-terminus, the 219-residue chain is Transcription factor MYB23 (219 aa).

HTH myb-type domains lie at 9 to 61 (EHEY…MNYL) and 62 to 116 (SPNV…SKKL). 2 DNA-binding regions (H-T-H motif) span residues 37 to 61 (WNRI…MNYL) and 89 to 112 (WSLI…NTHL).

As to quaternary structure, interacts with BHLH2/EGL3/MYC146, BHLH12/MYC1 and GL3. Expressed in roots, seed coats, leaves, stems and flowers. Detected specifically in trichomes, and in the cell division and differentiation zone of the root.

Its subcellular location is the nucleus. Functionally, transcription activator, when associated with BHLH2/EGL3/MYC146 or BHLH12/MYC1. Regulates the epidermal cell fate specification. Mediates the formation of columellae and accumulation of mucilages on seed coats. Controls the elongation of epidermal cells positively in roots but negatively in stems, leading to the promotion of primary roots elongation and repression of leaves and stems elongation, respectively. Ovoids ectopic root-hair formation, probably by inducing GL2 in roots. Controls trichome initiation and branching. The polypeptide is Transcription factor MYB23 (MYB23) (Arabidopsis thaliana (Mouse-ear cress)).